The following is a 333-amino-acid chain: Neuropeptides B/W receptor type 2 (333 aa).

The Extracellular portion of the chain corresponds to Met1–Tyr45. Asn24, Asn29, and Asn34 each carry an N-linked (GlcNAc...) asparagine glycan. A helical membrane pass occupies residues Val46–Val69. Residues Ile70–Thr80 lie on the Cytoplasmic side of the membrane. A helical transmembrane segment spans residues Asn81–His105. Residues Leu106 to Val120 are Extracellular-facing. Cys117 and Cys197 are joined by a disulfide. The helical transmembrane segment at Leu121–Val140 threads the bilayer. Residues Asp141 to Val165 lie on the Cytoplasmic side of the membrane. The chain crosses the membrane as a helical span at residues Ala166–Ala185. The Extracellular segment spans residues Gly186–Ala211. The helical transmembrane segment at Ser212 to Thr233 threads the bilayer. The Cytoplasmic segment spans residues Asp234–Lys257. A helical transmembrane segment spans residues Val258–Val282. Residues Ala283–Pro292 lie on the Extracellular side of the membrane. Residues Leu293–Ala307 traverse the membrane as a helical segment. Residues Asn308–Cys333 lie on the Cytoplasmic side of the membrane.

This sequence belongs to the G-protein coupled receptor 1 family. As to expression, detected at high levels in caudate nucleus, hippocampus and amygdala; at moderate levels in the adult brain, thalamus, parietal cortex, pituitary gland, adrenal gland and lymph nodes.

The protein localises to the cell membrane. Its function is as follows. Interacts specifically with a number of opioid ligands. Receptor for neuropeptides B and W, which may be involved in neuroendocrine system regulation, food intake and the organization of other signals. The sequence is that of Neuropeptides B/W receptor type 2 (NPBWR2) from Homo sapiens (Human).